The following is a 270-amino-acid chain: Fluoride-specific ion channel FluC 1 (270 aa).

The next 4 membrane-spanning stretches (helical) occupy residues 4 to 24, 35 to 55, 67 to 87, and 96 to 116; these read IIILVVIGGAFGAMTREFIML, LDILVANVVACFLLGTVTALY, IIGTGMMGGVSTFSSFAYGSV, and AFLIAAAYVTVSVVAGYVAVL. Na(+)-binding residues include glycine 74 and serine 77.

Belongs to the fluoride channel Fluc/FEX (TC 1.A.43) family.

It localises to the cell inner membrane. It catalyses the reaction fluoride(in) = fluoride(out). Its activity is regulated as follows. Na(+) is not transported, but it plays an essential structural role and its presence is essential for fluoride channel function. Functionally, fluoride-specific ion channel. Important for reducing fluoride concentration in the cell, thus reducing its toxicity. The chain is Fluoride-specific ion channel FluC 1 from Brucella abortus biovar 1 (strain 9-941).